The primary structure comprises 103 residues: Auxin-responsive protein SAUR50 (103 aa).

It belongs to the ARG7 family.

Effector of hormonal and environmental signals in plant growth. Involved in heliotropism. This chain is Auxin-responsive protein SAUR50, found in Helianthus annuus (Common sunflower).